We begin with the raw amino-acid sequence, 295 residues long: Ubiquinol-cytochrome c reductase complex assembly factor 1 (295 aa).

The protein belongs to the CBP3 family. In terms of assembly, interacts with UQCC2. Interacts with UQCC3. Forms a complex, named COMB/coordinator of mitochondrial CYTB biogenesis, composed of UQCC1, UQCC2, UQCC4, UQCC5 and UQCC6; stabilizes nascent cytochrome b/MT-CYB and promotes its membrane insertion. Forms a complex, named COMA, composed of UQCC1, UQCC2 and UQCC4; activates MT-CYB translation. Forms a complex, named COMC, composed of UQCC1, UQCC2; UQCC3 and UQCC4; mediates MT-CYB hemylation and association with the first nuclear-encoded CIII subunit UQCRQ. As to expression, in the brain it is restricted to the olfactory bulb, the hippocampus, the piriform cortex and the Purkinje cells.

The protein resides in the mitochondrion inner membrane. It localises to the cytoplasmic vesicle. Functionally, required for the assembly of the ubiquinol-cytochrome c reductase complex (mitochondrial respiratory chain complex III or cytochrome b-c1 complex). Involved in cytochrome b translation and/or stability. This Mus musculus (Mouse) protein is Ubiquinol-cytochrome c reductase complex assembly factor 1 (Uqcc1).